A 103-amino-acid polypeptide reads, in one-letter code: NADH-quinone oxidoreductase subunit K (103 aa).

The next 3 helical transmembrane spans lie at isoleucine 5 to threonine 25, valine 30 to phenylalanine 50, and leucine 66 to leucine 86.

Belongs to the complex I subunit 4L family. In terms of assembly, NDH-1 is composed of 14 different subunits. Subunits NuoA, H, J, K, L, M, N constitute the membrane sector of the complex.

It is found in the cell membrane. The catalysed reaction is a quinone + NADH + 5 H(+)(in) = a quinol + NAD(+) + 4 H(+)(out). NDH-1 shuttles electrons from NADH, via FMN and iron-sulfur (Fe-S) centers, to quinones in the respiratory chain. The immediate electron acceptor for the enzyme in this species is believed to be a menaquinone. Couples the redox reaction to proton translocation (for every two electrons transferred, four hydrogen ions are translocated across the cytoplasmic membrane), and thus conserves the redox energy in a proton gradient. The protein is NADH-quinone oxidoreductase subunit K of Brevibacillus brevis (strain 47 / JCM 6285 / NBRC 100599).